The primary structure comprises 109 residues: Cell division protein ZapA (109 aa).

The stretch at 21 to 100 (PDQRDALNQA…EQALLERGRI (80 aa)) forms a coiled coil.

It belongs to the ZapA family. Type 1 subfamily. Homodimer. Interacts with FtsZ.

It is found in the cytoplasm. Functionally, activator of cell division through the inhibition of FtsZ GTPase activity, therefore promoting FtsZ assembly into bundles of protofilaments necessary for the formation of the division Z ring. It is recruited early at mid-cell but it is not essential for cell division. This Shigella dysenteriae serotype 1 (strain Sd197) protein is Cell division protein ZapA.